The chain runs to 500 residues: Serine carboxypeptidase 3 (500 aa).

An N-terminal signal peptide occupies residues 1 to 21 (MATTPRLASLLLLLALCAAAA). The propeptide occupies 22–73 (GALRLPPDASFPGAQAERLIRALNLLPGRPRRGLGAGAEDVAPGQLLERRVT). 3 disulfides stabilise this stretch: Cys126–Cys366, Cys294–Cys309, and Cys332–Cys337. Residue Asn144 is glycosylated (N-linked (GlcNAc...) asparagine). Ser216 is a catalytic residue. The active site involves Asp404. Position 407 (Cys407) interacts with substrate. The active site involves His461. A propeptide spanning residues 485 to 500 (ESVPEEEPATTFYAAI) is cleaved from the precursor.

The protein belongs to the peptidase S10 family. As to quaternary structure, monomer.

It carries out the reaction Release of a C-terminal amino acid with broad specificity.. The polypeptide is Serine carboxypeptidase 3 (CBP3) (Triticum aestivum (Wheat)).